Here is a 377-residue protein sequence, read N- to C-terminus: Succinyl-diaminopimelate desuccinylase (377 aa).

His68 is a Zn(2+) binding site. Asp70 is a catalytic residue. Zn(2+) is bound at residue Asp101. Glu135 serves as the catalytic Proton acceptor. The Zn(2+) site is built by Glu136, Glu164, and His350.

The protein belongs to the peptidase M20A family. DapE subfamily. As to quaternary structure, homodimer. It depends on Zn(2+) as a cofactor. Co(2+) is required as a cofactor.

It carries out the reaction N-succinyl-(2S,6S)-2,6-diaminopimelate + H2O = (2S,6S)-2,6-diaminopimelate + succinate. Its pathway is amino-acid biosynthesis; L-lysine biosynthesis via DAP pathway; LL-2,6-diaminopimelate from (S)-tetrahydrodipicolinate (succinylase route): step 3/3. Its function is as follows. Catalyzes the hydrolysis of N-succinyl-L,L-diaminopimelic acid (SDAP), forming succinate and LL-2,6-diaminopimelate (DAP), an intermediate involved in the bacterial biosynthesis of lysine and meso-diaminopimelic acid, an essential component of bacterial cell walls. This is Succinyl-diaminopimelate desuccinylase from Aliivibrio fischeri (strain ATCC 700601 / ES114) (Vibrio fischeri).